A 276-amino-acid chain; its full sequence is Undecaprenyl-diphosphatase 1 (276 aa).

Transmembrane regions (helical) follow at residues 43–63, 85–105, 109–129, 184–204, 214–234, and 254–274; these read RAMA…VWEF, ANLL…ADLI, LFNP…MLWA, ATEF…VYSG, ADFP…MIAV, and IVFG…WTAA.

This sequence belongs to the UppP family.

The protein localises to the cell inner membrane. It carries out the reaction di-trans,octa-cis-undecaprenyl diphosphate + H2O = di-trans,octa-cis-undecaprenyl phosphate + phosphate + H(+). Functionally, catalyzes the dephosphorylation of undecaprenyl diphosphate (UPP). Confers resistance to bacitracin. This is Undecaprenyl-diphosphatase 1 from Pseudomonas fluorescens (strain Pf0-1).